The following is a 511-amino-acid chain: Apolipoprotein N-acyltransferase (511 aa).

A run of 6 helical transmembrane segments spans residues 7–25, 58–78, 90–110, 125–145, 163–183, and 192–212; these read PGWP…TPLA, GWWY…VSIH, FLML…AWLW, LAFA…LTGF, VPVG…ALLV, and GASL…GLYL. The region spanning 230-470 is the CN hydrolase domain; sequence IQGNIAQELK…QGILRGEVIP (241 aa). Glu269 (proton acceptor) is an active-site residue. Lys330 is an active-site residue. Catalysis depends on Cys382, which acts as the Nucleophile. Residues 478–498 form a helical membrane-spanning segment; sequence LQYRVWPLAGLAGVLLLWALL.

It belongs to the CN hydrolase family. Apolipoprotein N-acyltransferase subfamily.

The protein resides in the cell inner membrane. The catalysed reaction is N-terminal S-1,2-diacyl-sn-glyceryl-L-cysteinyl-[lipoprotein] + a glycerophospholipid = N-acyl-S-1,2-diacyl-sn-glyceryl-L-cysteinyl-[lipoprotein] + a 2-acyl-sn-glycero-3-phospholipid + H(+). The protein operates within protein modification; lipoprotein biosynthesis (N-acyl transfer). Catalyzes the phospholipid dependent N-acylation of the N-terminal cysteine of apolipoprotein, the last step in lipoprotein maturation. The protein is Apolipoprotein N-acyltransferase of Pseudomonas paraeruginosa (strain DSM 24068 / PA7) (Pseudomonas aeruginosa (strain PA7)).